Reading from the N-terminus, the 444-residue chain is Homocysteine/cysteine synthase (444 aa).

An N6-(pyridoxal phosphate)lysine modification is found at lysine 208.

The protein belongs to the trans-sulfuration enzymes family. In terms of assembly, homotetramer. The cofactor is pyridoxal 5'-phosphate.

It is found in the cytoplasm. It catalyses the reaction O-acetyl-L-homoserine + methanethiol = L-methionine + acetate + H(+). The catalysed reaction is O-acetyl-L-homoserine + hydrogen sulfide = L-homocysteine + acetate. The enzyme catalyses O-acetyl-L-serine + hydrogen sulfide = L-cysteine + acetate. The protein operates within amino-acid biosynthesis; L-methionine biosynthesis via de novo pathway; L-homocysteine from O-acetyl-L-homoserine. It participates in amino-acid biosynthesis; L-cysteine biosynthesis; L-cysteine from L-serine: step 2/2. Functionally, catalyzes the conversion of O-acetyl-L-homoserine (OAH) into homocysteine in the methionine biosynthesis pathway. Also catalyzes the conversion of O-acetylserine (OAS) into cysteine, the last step in the cysteine biosynthesis pathway. In Kluyveromyces lactis (strain ATCC 8585 / CBS 2359 / DSM 70799 / NBRC 1267 / NRRL Y-1140 / WM37) (Yeast), this protein is Homocysteine/cysteine synthase (MET17).